The sequence spans 110 residues: MSRILNMNEYISLNHYLILSSLVFTIGMFGLFMHRKNIINILMSIELMLLAVNINFVAFSIYMQELSGQIFSIIILTVAAAETSIGLAILLIYFRNKGSIEITDINQMRG.

3 consecutive transmembrane segments (helical) span residues 13 to 33 (LNHY…GLFM), 41 to 61 (ILMS…AFSI), and 73 to 93 (IIIL…LLIY).

This sequence belongs to the complex I subunit 4L family. As to quaternary structure, NDH-1 is composed of 14 different subunits. Subunits NuoA, H, J, K, L, M, N constitute the membrane sector of the complex.

The protein localises to the cell inner membrane. It catalyses the reaction a quinone + NADH + 5 H(+)(in) = a quinol + NAD(+) + 4 H(+)(out). NDH-1 shuttles electrons from NADH, via FMN and iron-sulfur (Fe-S) centers, to quinones in the respiratory chain. The immediate electron acceptor for the enzyme in this species is believed to be ubiquinone. Couples the redox reaction to proton translocation (for every two electrons transferred, four hydrogen ions are translocated across the cytoplasmic membrane), and thus conserves the redox energy in a proton gradient. In Rickettsia felis (strain ATCC VR-1525 / URRWXCal2) (Rickettsia azadi), this protein is NADH-quinone oxidoreductase subunit K.